We begin with the raw amino-acid sequence, 309 residues long: Aspartate carbamoyltransferase catalytic subunit (309 aa).

Positions 55 and 56 each coordinate carbamoyl phosphate. Lysine 85 provides a ligand contact to L-aspartate. Arginine 106, histidine 135, and glutamine 138 together coordinate carbamoyl phosphate. 2 residues coordinate L-aspartate: arginine 168 and arginine 230. Carbamoyl phosphate contacts are provided by leucine 268 and proline 269.

This sequence belongs to the aspartate/ornithine carbamoyltransferase superfamily. ATCase family. Heterododecamer (2C3:3R2) of six catalytic PyrB chains organized as two trimers (C3), and six regulatory PyrI chains organized as three dimers (R2).

It catalyses the reaction carbamoyl phosphate + L-aspartate = N-carbamoyl-L-aspartate + phosphate + H(+). It functions in the pathway pyrimidine metabolism; UMP biosynthesis via de novo pathway; (S)-dihydroorotate from bicarbonate: step 2/3. In terms of biological role, catalyzes the condensation of carbamoyl phosphate and aspartate to form carbamoyl aspartate and inorganic phosphate, the committed step in the de novo pyrimidine nucleotide biosynthesis pathway. This Wigglesworthia glossinidia brevipalpis protein is Aspartate carbamoyltransferase catalytic subunit.